Reading from the N-terminus, the 324-residue chain is Annexin A3 (324 aa).

4 Annexin repeats span residues 19 to 90, 91 to 162, 174 to 246, and 250 to 321; these read FNPS…ALIT, APAV…TLAD, HLAK…AVVR, and NTPA…KICG. Lys178 is subject to N6-acetyllysine. The residue at position 268 (Thr268) is a Phosphothreonine.

This sequence belongs to the annexin family.

Its function is as follows. Inhibitor of phospholipase A2, also possesses anti-coagulant properties. The protein is Annexin A3 (Anxa3) of Rattus norvegicus (Rat).